Consider the following 542-residue polypeptide: Glutamyl-tRNA(Gln) amidotransferase subunit A, mitochondrial (542 aa).

Catalysis depends on charge relay system residues K55 and S143. The active-site Acyl-ester intermediate is the S167.

It belongs to the amidase family. GatA subfamily. In terms of assembly, subunit of the heterotrimeric GatCAB amidotransferase (AdT) complex, composed of A, B and C subunits.

The protein localises to the mitochondrion. The enzyme catalyses L-glutamyl-tRNA(Gln) + L-glutamine + ATP + H2O = L-glutaminyl-tRNA(Gln) + L-glutamate + ADP + phosphate + H(+). Functionally, allows the formation of correctly charged Gln-tRNA(Gln) through the transamidation of misacylated Glu-tRNA(Gln) in the mitochondria. The reaction takes place in the presence of glutamine and ATP through an activated gamma-phospho-Glu-tRNA(Gln). The sequence is that of Glutamyl-tRNA(Gln) amidotransferase subunit A, mitochondrial from Neurospora crassa (strain ATCC 24698 / 74-OR23-1A / CBS 708.71 / DSM 1257 / FGSC 987).